The primary structure comprises 543 residues: Chaperonin GroEL (543 aa).

ATP is bound by residues 29–32, 86–90, Gly-413, 477–479, and Asp-493; these read TLGP, DGTTT, and DAL.

It belongs to the chaperonin (HSP60) family. In terms of assembly, forms a cylinder of 14 subunits composed of two heptameric rings stacked back-to-back. Interacts with the co-chaperonin GroES.

The protein resides in the cytoplasm. It catalyses the reaction ATP + H2O + a folded polypeptide = ADP + phosphate + an unfolded polypeptide.. In terms of biological role, together with its co-chaperonin GroES, plays an essential role in assisting protein folding. The GroEL-GroES system forms a nano-cage that allows encapsulation of the non-native substrate proteins and provides a physical environment optimized to promote and accelerate protein folding. This is Chaperonin GroEL from Clostridium botulinum.